A 289-amino-acid polypeptide reads, in one-letter code: UDP-3-O-acyl-N-acetylglucosamine deacetylase (289 aa).

Zn(2+) contacts are provided by His79, His236, and Asp240. The active-site Proton donor is the His263.

Belongs to the LpxC family. Requires Zn(2+) as cofactor.

The catalysed reaction is a UDP-3-O-[(3R)-3-hydroxyacyl]-N-acetyl-alpha-D-glucosamine + H2O = a UDP-3-O-[(3R)-3-hydroxyacyl]-alpha-D-glucosamine + acetate. It functions in the pathway glycolipid biosynthesis; lipid IV(A) biosynthesis; lipid IV(A) from (3R)-3-hydroxytetradecanoyl-[acyl-carrier-protein] and UDP-N-acetyl-alpha-D-glucosamine: step 2/6. In terms of biological role, catalyzes the hydrolysis of UDP-3-O-myristoyl-N-acetylglucosamine to form UDP-3-O-myristoylglucosamine and acetate, the committed step in lipid A biosynthesis. This Rickettsia typhi (strain ATCC VR-144 / Wilmington) protein is UDP-3-O-acyl-N-acetylglucosamine deacetylase.